The primary structure comprises 630 residues: WD repeat-containing protein 26 homolog (630 aa).

Residues 1–13 are compositionally biased toward low complexity; it reads MQSTSSTSSGSCS. The disordered stretch occupies residues 1 to 90; it reads MQSTSSTSSG…NNRENTSCSG (90 aa). 2 positions are modified to phosphoserine: Ser-36 and Ser-40. Polar residues-rich tracts occupy residues 48–57 and 66–75; these read PSGSSAATNG and IVNNNGSSSR. The 33-residue stretch at 96–128 folds into the LisH domain; that stretch reads SNQEIIRLIGQYLHDVGLDKSVQTLMLESGCYL. Residues 129–190 form the CTLH domain; that stretch reads EHPSATKFRE…EHLDDGNPLD (62 aa). 7 WD repeats span residues 312-351, 359-400, 404-443, 445-482, 485-524, 529-569, and 572-612; these read DHCD…LTLK, QAQL…LVVK, SLED…VDSW, GVRV…SDFD, REPH…LVRR, RQSN…PLAK, and GHTK…SSAT. The tract at residues 604–630 is disordered; the sequence is PKPNGSSATTESDDCSSSSSSSSWNMT. Residues 609–630 are compositionally biased toward low complexity; it reads SSATTESDDCSSSSSSSSWNMT.

It is found in the cytoplasm. It localises to the mitochondrion. G-beta-like protein involved in cell signal transduction. The chain is WD repeat-containing protein 26 homolog from Drosophila melanogaster (Fruit fly).